A 62-amino-acid polypeptide reads, in one-letter code: MRCVPVFIILLLLSPSAPSVDAHPMTKDDVPQASLHDDAKRTLQVPWMKRGCCAMLTCCVGR.

An N-terminal signal peptide occupies residues 1–22 (MRCVPVFIILLLLSPSAPSVDA). Positions 23-48 (HPMTKDDVPQASLHDDAKRTLQVPWM) are excised as a propeptide. V60 is modified (valine amide).

The protein belongs to the conotoxin T superfamily. Post-translationally, contains 2 disulfide bonds that can be either 'C1-C3, C2-C4' or 'C1-C4, C2-C3', since these disulfide connectivities have been observed for conotoxins with cysteine framework V (for examples, see AC P0DQQ7 and AC P81755). As to expression, expressed by the venom duct.

It localises to the secreted. In Conus quercinus (Oak cone), this protein is Conotoxin Qc5.2.